We begin with the raw amino-acid sequence, 367 residues long: FAD synthetase 2, chloroplastic (367 aa).

The N-terminal 57 residues, 1–57, are a transit peptide targeting the chloroplast; sequence MLCGGSRVLQHLSDHNHHNSIGLGLGFCGAKIVQLSSFFLRPSQAMAKSHHFSRKLR.

It depends on Mg(2+) as a cofactor.

The protein localises to the plastid. Its subcellular location is the chloroplast. It carries out the reaction FMN + ATP + H(+) = FAD + diphosphate. Its pathway is cofactor biosynthesis; FAD biosynthesis; FAD from FMN: step 1/1. Functionally, catalyzes the adenylation of flavin mononucleotide (FMN) to form flavin adenine dinucleotide (FAD) coenzyme. The sequence is that of FAD synthetase 2, chloroplastic from Arabidopsis thaliana (Mouse-ear cress).